Here is a 118-residue protein sequence, read N- to C-terminus: uncharacterized protein (118 aa).

4 helical membrane-spanning segments follow: residues 5–20 (IVFY…SVVM), 25–42 (VIRT…LLYF), 53–73 (ALAI…FIIL), and 83–103 (LFFT…SLSI).

It is found in the cell membrane. This is an uncharacterized protein from Bacillus subtilis (strain 168).